Here is a 307-residue protein sequence, read N- to C-terminus: Taste receptor type 2 member 10 (307 aa).

Over 1–6 (MLRVVE) the chain is Extracellular. A helical transmembrane segment spans residues 7 to 27 (GIFIFVVISESVFGVLGNGFI). Topologically, residues 28–42 (GLVNCIDCAKNKLST) are cytoplasmic. Residues 43-63 (IGFILTGLAISRIFLIWIIIT) form a helical membrane-spanning segment. Residues 64-100 (DGFIQIFSPNIYASSNLIEYISYFWVIGNQSSMWFAT) lie on the Extracellular side of the membrane. Residues 101–121 (SLSIFYFLKIANFSNYIFLWL) traverse the membrane as a helical segment. The Cytoplasmic portion of the chain corresponds to 122-126 (KSRTN). Residues 127-147 (MVLPFMIVFLLISSLLNFAYI) form a helical membrane-spanning segment. Residues 148-179 (AKILNDYKMKNDTVWDLNMYKSEYFIKQILLN) are Extracellular-facing. Residue Asn-158 is glycosylated (N-linked (GlcNAc...) asparagine). The helical transmembrane segment at 180–200 (LGVIFFFTLSLITCVLLIISL) threads the bilayer. At 201–227 (WRHNRQMQSNVTGLRDSNTEAHVKAMK) the chain is on the cytoplasmic side. Residues 228–248 (VLISFIILFILYFIGMAIEIS) form a helical membrane-spanning segment. The Extracellular segment spans residues 249-257 (YFTVRENKL). Residues 258–278 (LLMFGMTTTAIYPWGHSFILI) traverse the membrane as a helical segment. At 279–307 (LGNSKLKQASLRVLQQLKCCEKRKNLRVT) the chain is on the cytoplasmic side.

It belongs to the G-protein coupled receptor T2R family.

The protein resides in the membrane. Receptor that may play a role in the perception of bitterness and is gustducin-linked. May play a role in sensing the chemical composition of the gastrointestinal content. The activity of this receptor may stimulate alpha gustducin, mediate PLC-beta-2 activation and lead to the gating of TRPM5. This Pan paniscus (Pygmy chimpanzee) protein is Taste receptor type 2 member 10 (TAS2R10).